The primary structure comprises 1124 residues: ATP-dependent DNA helicase mph1 (1124 aa).

Disordered stretches follow at residues 1-103 (MFTL…EARS) and 123-302 (QLTQ…PTQH). Composition is skewed to acidic residues over residues 7 to 17 (DSSDYFDDDLG) and 169 to 178 (RDDEYDDDEE). Polar residues predominate over residues 210–222 (TPIIGQQSTTIEA). Acidic residues predominate over residues 226–236 (LLDDIPDDAFD). Polar residues predominate over residues 255-271 (SFTQSTNRPLGVRQTTL). A Helicase ATP-binding domain is found at 328 to 496 (IAQKGLFHNL…AVIDGLDISR (169 aa)). Residue 341–348 (LPTGLGKT) participates in ATP binding. The short motif at 444–447 (DEAH) is the DEAH box element. The 175-residue stretch at 666–840 (YLKQVVLNHF…GTRFTFHDDM (175 aa)) folds into the Helicase C-terminal domain. Over residues 855–873 (KRAIDIPEENTVRDLPEPK) the composition is skewed to basic and acidic residues. Disordered stretches follow at residues 855 to 923 (KRAI…TPEP) and 1016 to 1124 (MPKA…DSDD). Composition is skewed to basic residues over residues 874-886 (RRGRAPKRPPKKF) and 906-916 (SKRRVPNKSKA).

Belongs to the DEAD box helicase family. DEAH subfamily. FANCM sub-subfamily. In terms of assembly, interacts with the MHF histone-fold complex to form the FANCM-MHF complex.

It is found in the nucleus. It catalyses the reaction ATP + H2O = ADP + phosphate + H(+). In terms of biological role, ATP-dependent DNA helicase involved in DNA damage repair by homologous recombination and in genome maintenance. Capable of unwinding D-loops. Plays a role in limiting crossover recombinants during mitotic DNA double-strand break (DSB) repair. Component of a FANCM-MHF complex which promotes gene conversion at blocked replication forks, probably by reversal of the stalled fork. This chain is ATP-dependent DNA helicase mph1, found in Aspergillus niger (strain ATCC MYA-4892 / CBS 513.88 / FGSC A1513).